We begin with the raw amino-acid sequence, 284 residues long: MSWFKRKEKGITTATEDKMDVPKGLWYKSPTGKIIDAEELARNLWVSPEDDFHVRIGSAEYFHILFDNNEFTELDANMTSKDPLGFVDTKKYADRLVDVMQKTKLKDAVRTAVGKSKGRDLVICCMDFAFIGGSMGAVVGEKIARGIDHSIKNKIPFVMISKSGGARMMEAAYSLMQLAKTSAKLAQLAEAKIPYISLCTDPTTGGTTASYAMLGDINISEPGALIGFAGPRVVRDTTGKDLPEGFQTAEFVLEHGFLDFITPRKELKDKINLYLDLILNNEVR.

Residues 24–284 (GLWYKSPTGK…LDLILNNEVR (261 aa)) form the CoA carboxyltransferase N-terminal domain.

This sequence belongs to the AccD/PCCB family. As to quaternary structure, acetyl-CoA carboxylase is a heterohexamer composed of biotin carboxyl carrier protein (AccB), biotin carboxylase (AccC) and two subunits each of ACCase subunit alpha (AccA) and ACCase subunit beta (AccD).

It localises to the cytoplasm. The catalysed reaction is N(6)-carboxybiotinyl-L-lysyl-[protein] + acetyl-CoA = N(6)-biotinyl-L-lysyl-[protein] + malonyl-CoA. The protein operates within lipid metabolism; malonyl-CoA biosynthesis; malonyl-CoA from acetyl-CoA: step 1/1. In terms of biological role, component of the acetyl coenzyme A carboxylase (ACC) complex. Biotin carboxylase (BC) catalyzes the carboxylation of biotin on its carrier protein (BCCP) and then the CO(2) group is transferred by the transcarboxylase to acetyl-CoA to form malonyl-CoA. In Flavobacterium psychrophilum (strain ATCC 49511 / DSM 21280 / CIP 103535 / JIP02/86), this protein is Acetyl-coenzyme A carboxylase carboxyl transferase subunit beta.